Here is a 223-residue protein sequence, read N- to C-terminus: UPF0441 protein YgiB (223 aa).

Residues 201–223 are disordered; the sequence is ESVAKQSTMQRSAAGTSTRSMGG. Residues 204 to 223 are compositionally biased toward polar residues; the sequence is AKQSTMQRSAAGTSTRSMGG.

The protein belongs to the UPF0441 family.

This is UPF0441 protein YgiB from Salmonella gallinarum (strain 287/91 / NCTC 13346).